We begin with the raw amino-acid sequence, 338 residues long: Endonuclease V (338 aa).

Asp-52 and Asp-126 together coordinate Mg(2+). The disordered stretch occupies residues 253–338; sequence QLGVAPAQRK…PSPAWVQSPP (86 aa). Basic and acidic residues-rich tracts occupy residues 260–270 and 287–323; these read QRKDRSQKEQR and RPPECDGRDSSSDRKAPEPGFQEQKDQQLEGTGHQED. Residues 328–338 are compositionally biased toward pro residues; the sequence is PPSPAWVQSPP.

This sequence belongs to the endonuclease V family. In terms of assembly, monomer. Interacts with PABPC1; the interaction is RNA-dependent and stimulates ENDOV activity. Mg(2+) serves as cofactor. Highest levels detected in liver with high levels also found in heart, kidney and testis. Expressed at low levels in brain.

The protein localises to the cytoplasm. It is found in the nucleus. The protein resides in the nucleolus. It localises to the stress granule. Functionally, endoribonuclease that specifically cleaves inosine-containing RNAs: cleaves RNA at the second phosphodiester bond 3' to inosine. Active against both single-stranded and double-stranded RNAs. Has strong preference for single-stranded RNAs (ssRNAs) toward double-stranded RNAs (dsRNAs). Cleaves mRNAs and tRNAs containing inosine. Also able to cleave structure-specific dsRNA substrates containing the specific sites 5'-IIUI-3' and 5'-UIUU-3'. Inosine is present in a number of RNAs following editing; the function of inosine-specific endoribonuclease is still unclear: it could either play a regulatory role in edited RNAs, or be involved in antiviral response by removing the hyperedited long viral dsRNA genome that has undergone A-to-I editing. Binds branched DNA structures. The sequence is that of Endonuclease V (Endov) from Mus musculus (Mouse).